The chain runs to 125 residues: Multifunctional methyltransferase subunit TRM112-like protein (125 aa).

Residues 2–121 (KLFVHNFMSS…RDGIPNMLKV (120 aa)) form the TRM112 domain.

The protein belongs to the TRM112 family.

It is found in the nucleus. The protein resides in the nucleoplasm. It localises to the cytoplasm. The protein localises to the perinuclear region. Functionally, acts as an activator of both RNA and protein methyltransferases. The sequence is that of Multifunctional methyltransferase subunit TRM112-like protein from Caenorhabditis elegans.